Reading from the N-terminus, the 239-residue chain is Large ribosomal subunit protein uL1 (239 aa).

This sequence belongs to the universal ribosomal protein uL1 family. In terms of assembly, part of the 50S ribosomal subunit.

Its function is as follows. Binds directly to 23S rRNA. The L1 stalk is quite mobile in the ribosome, and is involved in E site tRNA release. In terms of biological role, protein L1 is also a translational repressor protein, it controls the translation of the L11 operon by binding to its mRNA. This is Large ribosomal subunit protein uL1 from Rickettsia akari (strain Hartford).